A 225-amino-acid polypeptide reads, in one-letter code: Large ribosomal subunit protein uL1 (225 aa).

It belongs to the universal ribosomal protein uL1 family. In terms of assembly, part of the 50S ribosomal subunit.

In terms of biological role, binds directly to 23S rRNA. Probably involved in E site tRNA release. Its function is as follows. Protein L1 is also a translational repressor protein, it controls the translation of its operon by binding to its mRNA. This chain is Large ribosomal subunit protein uL1, found in Thermofilum pendens (strain DSM 2475 / Hrk 5).